The chain runs to 374 residues: DNA replication and repair protein RecF (374 aa).

30–37 (GHNAQGKT) is a binding site for ATP.

This sequence belongs to the RecF family.

It is found in the cytoplasm. Its function is as follows. The RecF protein is involved in DNA metabolism; it is required for DNA replication and normal SOS inducibility. RecF binds preferentially to single-stranded, linear DNA. It also seems to bind ATP. This chain is DNA replication and repair protein RecF, found in Limosilactobacillus reuteri (strain DSM 20016) (Lactobacillus reuteri).